Here is a 212-residue protein sequence, read N- to C-terminus: Fe/S biogenesis protein NfuA (212 aa).

2 residues coordinate [4Fe-4S] cluster: C169 and C172.

The protein belongs to the NfuA family. In terms of assembly, homodimer. [4Fe-4S] cluster serves as cofactor.

Its function is as follows. Involved in iron-sulfur cluster biogenesis. Binds a 4Fe-4S cluster, can transfer this cluster to apoproteins, and thereby intervenes in the maturation of Fe/S proteins. Could also act as a scaffold/chaperone for damaged Fe/S proteins. This chain is Fe/S biogenesis protein NfuA, found in Acinetobacter baumannii (strain SDF).